The sequence spans 523 residues: Cytochrome P450 monooxygenase ple1 (523 aa).

The helical transmembrane segment at 9 to 29 (ALPVLAIWAAIGLAYWIDSQK) threads the bilayer. The N-linked (GlcNAc...) asparagine glycan is linked to N141. C444 is a heme binding site.

Belongs to the cytochrome P450 family. Heme is required as a cofactor.

It is found in the membrane. It participates in secondary metabolite biosynthesis; terpenoid biosynthesis. Cytochrome P450 monooxygenase; part of the gene cluster that mediates the biosynthesis of pleuromutilin, a tricyclic diterpene showing antibacterial properties. The geranylgeranyl diphosphate (GGPP) synthase ple4 catalyzes the first step in pleuromutilin biosynthesis. GGPP is then substrate of the premutilin synthase (PS) ple3 to yield premutilin. Premutilin synthase is a bifunctional enzyme composed of the fusion of a class II diterpene cyclase (DTC) and a class I diterpene synthase (DTS), with the corresponding domains and active sites containing characteristic aspartate-rich motifs. GGPP is first converted to mutildienyl-diphosphate (MPP) at the class II DTC site. MPP is subsequently further cyclized at the class I DTS site, followed by a 1,5-hydride shift and addition of water prior to terminating deprotonation, to yield premutilin. The cytochrome P450 monooxygenases ple5 and ple6 hydroxylate premutilin at C-11 and C-3, respectively, producing 11-hydroxypremutilin and 3-hydroxypremutilin. The combination of the actions of both ple5 and ple6 leads to the production of 3,11-dihydroxypremutilin. The short chain dehydrogenase ple7 further converts 3,11-dihydroxypremutilin into mutilin. The acetyltransferase ple2 then acetylates mutilin to produce 14-O-acetylmutilin. Finally, the cytochrome P450 monooxygenase ple1 catalyzes hydroxylation on the alpha position of the acetyl side chain of 14-O-acetylmutilin to yield pleuromutilin. The chain is Cytochrome P450 monooxygenase ple1 from Rhodocybe pseudopiperita (Clitopilus pseudopiperitus).